Reading from the N-terminus, the 888-residue chain is Autotaxin (888 aa).

A signal peptide spans 1–27 (MARRRSCQLHQVISLFTFAVGVNICLG). Positions 28-35 (VTANRIKR) are cleaved as a propeptide — removed by furin. Asn-54 carries N-linked (GlcNAc...) asparagine glycosylation. SMB domains are found at residues 55 to 98 (ISGS…LKTA) and 99 to 143 (GGWE…GESH). 10 disulfides stabilise this stretch: Cys-59–Cys-76, Cys-63–Cys-94, Cys-74–Cys-87, Cys-80–Cys-86, Cys-103–Cys-120, Cys-108–Cys-138, Cys-118–Cys-131, Cys-124–Cys-130, Cys-149–Cys-195, and Cys-157–Cys-351. The Cell attachment site motif lies at 127 to 129 (RGD). The phosphodiesterase stretch occupies residues 145 to 502 (VDDDCEEIKT…PTFKYKTKVP (358 aa)). Positions 172 and 210 each coordinate Zn(2+). Catalysis depends on Thr-210, which acts as the Nucleophile. Positions 210, 231, and 312 each coordinate 1-(9Z-octadecenoyl)-sn-glycero-3-phosphate. Thr-210, Asn-231, and Asp-312 together coordinate 1-hexadecanoyl-sn-glycero-3-phosphate. 1-tetradecanoyl-sn-glycerol 3-phosphate contacts are provided by Thr-210, Asn-231, and Asp-312. Asp-312, His-316, Asp-359, and His-360 together coordinate Zn(2+). 5 disulfide bridges follow: Cys-367–Cys-469, Cys-414–Cys-831, Cys-567–Cys-692, Cys-569–Cys-677, and Cys-800–Cys-810. N-linked (GlcNAc...) asparagine glycosylation occurs at Asn-411. His-475 is a binding site for Zn(2+). His-475 serves as a coordination point for 1-(9Z-octadecenoyl)-sn-glycero-3-phosphate. Position 475 (His-475) interacts with 1-hexadecanoyl-sn-glycero-3-phosphate. His-475 contributes to the 1-tetradecanoyl-sn-glycerol 3-phosphate binding site. Residue Asn-525 is glycosylated (N-linked (GlcNAc...) asparagine). The segment at 623 to 888 (LYGRPAVLYR…TYLQTYESEI (266 aa)) is nuclease-like domain. Residues Asp-765, Asp-767, Asp-769, Leu-771, and Asp-773 each contribute to the Ca(2+) site. Residue Asn-832 is glycosylated (N-linked (GlcNAc...) asparagine). Positions 855 to 876 (IEHLTSLDFFRKTSRSYPEILT) are required for secretion.

This sequence belongs to the nucleotide pyrophosphatase/phosphodiesterase family. Requires Zn(2+) as cofactor. Ca(2+) is required as a cofactor. Post-translationally, N-glycosylation, but not furin-cleavage, plays a critical role on secretion and on lysoPLD activity. In terms of processing, the interdomain disulfide bond between Cys-414 and Cys-831 is essential for catalytic activity. In terms of tissue distribution, detected in fetal serum (at protein level).

Its subcellular location is the secreted. It carries out the reaction a 1-O-alkyl-sn-glycero-3-phosphoethanolamine + H2O = a 1-O-alkyl-sn-glycero-3-phosphate + ethanolamine + H(+). The catalysed reaction is a 1-acyl-sn-glycero-3-phosphoethanolamine + H2O = a 1-acyl-sn-glycero-3-phosphate + ethanolamine + H(+). The enzyme catalyses 1-(9Z-octadecenoyl)-sn-glycero-3-phosphoethanolamine + H2O = 1-(9Z-octadecenoyl)-sn-glycero-3-phosphate + ethanolamine + H(+). It catalyses the reaction a 1-O-alkyl-sn-glycero-3-phosphocholine + H2O = a 1-O-alkyl-sn-glycero-3-phosphate + choline + H(+). It carries out the reaction 1-O-(9Z-octadecenyl)-sn-glycero-3-phosphocholine + H2O = 1-O-(9Z-octadecenyl)-sn-glycero-3-phosphate + choline + H(+). The catalysed reaction is 1-O-hexadecyl-sn-glycero-3-phosphocholine + H2O = 1-O-hexadecyl-sn-glycero-3-phosphate + choline + H(+). The enzyme catalyses a 1-O-(1Z-alkenyl)-sn-glycero-3-phosphocholine + H2O = a 1-O-(1Z-alkenyl)-sn-glycero-3-phosphate + choline + H(+). It catalyses the reaction a 1-acyl-sn-glycero-3-phosphocholine + H2O = a 1-acyl-sn-glycero-3-phosphate + choline + H(+). It carries out the reaction 1-dodecanoyl-sn-glycero-3-phosphocholine + H2O = 1-dodecanoyl-sn-glycerol 3-phosphate + choline + H(+). The catalysed reaction is 1-(9Z-octadecenoyl)-sn-glycero-3-phosphocholine + H2O = 1-(9Z-octadecenoyl)-sn-glycero-3-phosphate + choline + H(+). The enzyme catalyses 1-tetradecanoyl-sn-glycero-3-phosphocholine + H2O = 1-tetradecanoyl-sn-glycerol 3-phosphate + choline + H(+). It catalyses the reaction 1-decanoyl-sn-glycero-3-phosphocholine + H2O = 1-decanoyl-sn-glycero-3-phosphate + choline + H(+). It carries out the reaction 1-octadecanoyl-sn-glycero-3-phosphocholine + H2O = 1-octadecanoyl-sn-glycero-3-phosphate + choline + H(+). The catalysed reaction is 1-hexadecanoyl-sn-glycero-3-phosphocholine + H2O = 1-hexadecanoyl-sn-glycero-3-phosphate + choline + H(+). The enzyme catalyses 1-hexanoyl-sn-glycero-3-phosphocholine + H2O = 1-hexanoyl-sn-glycero-3-phosphate + choline + H(+). It catalyses the reaction 1-(9Z,12Z)-octadecadienoyl-sn-glycero-3-phosphocholine + H2O = 1-(9Z,12Z)-octadecadienoyl-sn-glycero-3-phosphate + choline + H(+). It carries out the reaction sphing-4-enine-phosphocholine + H2O = sphing-4-enine 1-phosphate + choline + H(+). The catalysed reaction is 1-(5Z,8Z,11Z,14Z-eicosatetraenoyl)-sn-glycero-3-phosphocholine + H2O = 1-(5Z,8Z,11Z,14Z-eicosatetraenoyl)-sn-glycero-3-phosphate + choline + H(+). The enzyme catalyses a 2-acyl-sn-glycero-3-phosphocholine + H2O = a 2-acyl-sn-glycerol 3-phosphate + choline + H(+). It catalyses the reaction a 1,2-diacyl-sn-glycero-3-phosphocholine + H2O = a 1,2-diacyl-sn-glycero-3-phosphate + choline + H(+). It carries out the reaction 1,2-dioctanoyl-sn-glycero-3-phosphocholine + H2O = 1,2-dioctanoyl-sn-glycero-3-phosphate + choline + H(+). The catalysed reaction is 1,2-didecanoyl-sn-glycero-3-phosphocholine + H2O = 1,2-didecanoyl-sn-glycero-3-phosphate + choline + H(+). The enzyme catalyses a 1-acyl-sn-glycero-3-phospho-L-serine + H2O = a 1-acyl-sn-glycero-3-phosphate + L-serine + H(+). It catalyses the reaction 1-(9Z-octadecenoyl)-sn-glycero-3-phospho-L-serine + H2O = 1-(9Z-octadecenoyl)-sn-glycero-3-phosphate + L-serine + H(+). It carries out the reaction a 2-acyl-sn-glycero-3-phospho-L-serine + H2O = a 2-acyl-sn-glycerol 3-phosphate + L-serine + H(+). Functionally, secreted lysophospholipase D that hydrolyzes lysophospholipids to produce the signaling molecule lysophosphatidic acid (LPA) in extracellular fluids. Its major substrate is lysophosphatidylcholine. Can also act on sphingosylphosphorylcholine producing sphingosine-1-phosphate, a modulator of cell motility. Can hydrolyze, in vitro, bis-pNPP, to some extent pNP-TMP, and barely ATP. Involved in several motility-related processes such as angiogenesis and neurite outgrowth. Acts as an angiogenic factor by stimulating migration of smooth muscle cells and microtubule formation. Stimulates migration of melanoma cells, probably via a pertussis toxin-sensitive G protein. May have a role in induction of parturition. Possible involvement in cell proliferation and adipose tissue development. Required for LPA production in activated platelets, cleaves the sn-1 lysophospholipids to generate sn-1 lysophosphatidic acids containing predominantly 18:2 and 20:4 fatty acids. Shows a preference for the sn-1 to the sn-2 isomer of 1-O-alkyl-sn-glycero-3-phosphocholine (lyso-PAF). The chain is Autotaxin from Bos taurus (Bovine).